The primary structure comprises 523 residues: Flavonoid 3',5'-hydroxylase (523 aa).

C460 contributes to the heme binding site.

The protein belongs to the cytochrome P450 family. The cofactor is heme.

The enzyme catalyses a 3',5'-unsubstituted flavanone + 2 reduced [NADPH--hemoprotein reductase] + 2 O2 = a 3',5'-dihydroxyflavanone + 2 oxidized [NADPH--hemoprotein reductase] + 2 H2O + 2 H(+). The protein operates within pigment biosynthesis; anthocyanin biosynthesis. Its function is as follows. Catalyzes the 3'5'-hydroxylation of naringenin and eriodictyol to form 5,7,3,'4',5'-pentahydroxyflavanone and 3',5'-hydroxylation of dihydrokaempferol and dihydroquercetin to form dihydromyricetin. The protein is Flavonoid 3',5'-hydroxylase (CYP75A6) of Campanula medium (Canterbury bells).